Consider the following 394-residue polypeptide: Probable fatty acyl-CoA transferase Rv3272 (394 aa).

Residue Asp-175 is the Nucleophile of the active site.

The protein belongs to the CoA-transferase III family. In terms of assembly, homodimer.

Its function is as follows. Probably involved in fatty acid metabolism. Binds to fatty acyl-CoAs of varying carbon chain lengths, with the highest binding affinity for palmitoyl-CoA (C16:0). In vitro, alters the cell wall lipid profile and protects mycobacteria from acidic, oxidative and antibiotic stress. May play a significant role in host-pathogen interaction. This Mycobacterium tuberculosis (strain ATCC 25618 / H37Rv) protein is Probable fatty acyl-CoA transferase Rv3272.